The following is a 260-amino-acid chain: Hydroxyethylthiazole kinase 1 (260 aa).

Residue M39 coordinates substrate. ATP is bound by residues R115 and T160. G187 is a substrate binding site.

The protein belongs to the Thz kinase family. Mg(2+) is required as a cofactor.

It carries out the reaction 5-(2-hydroxyethyl)-4-methylthiazole + ATP = 4-methyl-5-(2-phosphooxyethyl)-thiazole + ADP + H(+). Its pathway is cofactor biosynthesis; thiamine diphosphate biosynthesis; 4-methyl-5-(2-phosphoethyl)-thiazole from 5-(2-hydroxyethyl)-4-methylthiazole: step 1/1. In terms of biological role, catalyzes the phosphorylation of the hydroxyl group of 4-methyl-5-beta-hydroxyethylthiazole (THZ). The chain is Hydroxyethylthiazole kinase 1 from Streptococcus pneumoniae (strain JJA).